The chain runs to 138 residues: ATP synthase subunit g, mitochondrial (138 aa).

This sequence belongs to the ATPase g subunit family. In terms of assembly, F-type ATP synthases have 2 components, the catalytic core F(1) and the membrane-embedded component F(0), linked together by a central stalk and a peripheral stalk. The central stalk, also called rotor shaft, is often seen as part of F(1). The peripheral stalk is seen as part of F(0). F(0) contains the membrane channel next to the rotor. F-type ATP synthases form dimers but each monomer functions independently in ATP generation. The dimer consists of 17 different polypeptides: ATP1 (subunit alpha, 3 molecules per monomer, part of F(1)), ATP2 (subunit beta, 3 copies per monomer, part of F(1)), ATP3 (subunit gamma, part of the central stalk), ATP4 (subunit b, part of the peripheral stalk), ATP5/OSCP (subunit 5/OSCP, part of the peripheral stalk), ATP6 (subunit a, part of the peripheral stalk), ATP7 (subunit d, part of the peripheral stalk), ATP8 (subunit 8, part of the peripheral stalk), OLI1 (subunit c, part of the rotor, 10 molecules per monomer), ATP14 (subunit h, part of the peripheral stalk), ATP15 (subunit epsilon, part of the central stalk), ATP16 (subunit delta, part of the central stalk), ATP17 (subunit f, part of the peripheral stalk), ATP18 (subunit i/j, part of the peripheral stalk), ATP19 (subunit k, dimer-specific, at interface between monomers), ATP20 (subunit g, at interface between monomers), TIM11 (subunit e, at interface between monomers).

It is found in the mitochondrion inner membrane. In terms of biological role, mitochondrial membrane ATP synthase (F(1)F(0) ATP synthase or Complex V) produces ATP from ADP in the presence of a proton gradient across the membrane which is generated by electron transport complexes of the respiratory chain. F-type ATP synthases consist of two structural domains, F(1) - containing the extramembraneous catalytic core, and F(0) - containing the membrane proton channel, linked together by a central stalk and a peripheral stalk. During catalysis, ATP synthesis in the catalytic domain of F(1) is coupled via a rotary mechanism of the central stalk subunits to proton translocation. Part of the complex F(0) domain. Minor subunit located with subunit a/ATP6 in the membrane. Together with subunit e/TIM11, probably contributes to membrane curvature at the site of the ATP synthase dimer, ultimately contributing to formation of cristae. This is ATP synthase subunit g, mitochondrial from Yarrowia lipolytica (strain CLIB 122 / E 150) (Yeast).